Reading from the N-terminus, the 219-residue chain is Ran-specific GTPase-activating protein 1 (219 aa).

3 stretches are compositionally biased toward basic and acidic residues: residues 1–12 (MAEVERKEEQAK), 33–45 (AVGDGKEGGEAKK), and 57–72 (PRKDEGKGGEERDNID). Residues 1-72 (MAEVERKEEQ…KGGEERDNID (72 aa)) are disordered. The 141-residue stretch at 70–210 (NIDAAEVVEK…YDLGRAHNEK (141 aa)) folds into the RanBD1 domain.

This sequence belongs to the RANBP1 family.

The protein localises to the cytoplasm. Its subcellular location is the nucleus. Functionally, important for the export of protein containing nuclear export signal (NES) out of the nucleus. The chain is Ran-specific GTPase-activating protein 1 (YRB1) from Encephalitozoon cuniculi (strain GB-M1) (Microsporidian parasite).